The sequence spans 621 residues: NADPH-dependent diflavin oxidoreductase 1 (621 aa).

In terms of domain architecture, Flavodoxin-like spans 6–168; that stretch reads IAVLYGSETG…VYFEFEKRII (163 aa). FMN-binding positions include 12–17, 59–62, 106–115, and E142; these read SETGNA, STTG, and LGDSSYPKFN. Positions 224 to 489 constitute an FAD-binding FR-type domain; sequence KLIKTGTITL…VGPGVGLAPL (266 aa). FAD is bound by residues R381, 411–414, and 443–446; these read RLYS and GVCT. Residues 536 to 537 and 545 to 549 each bind NADP(+); these read SR and TKYVQ. Position 621 (W621) interacts with FAD.

It belongs to the NADPH-dependent diflavin oxidoreductase NDOR1 family. The protein in the N-terminal section; belongs to the flavodoxin family. This sequence in the C-terminal section; belongs to the flavoprotein pyridine nucleotide cytochrome reductase family. In terms of assembly, interacts with DRE2; as part of the cytosolic iron-sulfur (Fe-S) protein assembly (CIA) machinery. It depends on FAD as a cofactor. The cofactor is FMN.

The protein resides in the cytoplasm. It localises to the mitochondrion. It carries out the reaction 2 oxidized [2Fe-2S]-[protein] + NADPH = 2 reduced [2Fe-2S]-[protein] + NADP(+) + H(+). In terms of biological role, NADPH-dependent reductase which is a central component of the cytosolic iron-sulfur (Fe-S) protein assembly (CIA) machinery. Transfers electrons from NADPH via its FAD and FMN prosthetic groups to the [2Fe-2S] cluster of DRE2, another key component of the CIA machinery. In turn, this reduced cluster provides electrons for assembly of cytosolic iron-sulfur cluster proteins. Positively controls H(2)O(2)-induced cell death. The polypeptide is NADPH-dependent diflavin oxidoreductase 1 (Candida glabrata (strain ATCC 2001 / BCRC 20586 / JCM 3761 / NBRC 0622 / NRRL Y-65 / CBS 138) (Yeast)).